The chain runs to 200 residues: Dephospho-CoA kinase (200 aa).

Positions 6-200 (AIALSGGIAT…KIKAKYLEKK (195 aa)) constitute a DPCK domain. Position 14-19 (14-19 (ATGKST)) interacts with ATP.

Belongs to the CoaE family.

Its subcellular location is the cytoplasm. It catalyses the reaction 3'-dephospho-CoA + ATP = ADP + CoA + H(+). It functions in the pathway cofactor biosynthesis; coenzyme A biosynthesis; CoA from (R)-pantothenate: step 5/5. Its function is as follows. Catalyzes the phosphorylation of the 3'-hydroxyl group of dephosphocoenzyme A to form coenzyme A. The polypeptide is Dephospho-CoA kinase (Sulfurimonas denitrificans (strain ATCC 33889 / DSM 1251) (Thiomicrospira denitrificans (strain ATCC 33889 / DSM 1251))).